Reading from the N-terminus, the 1434-residue chain is Probable deoxyribonuclease RhsA (1434 aa).

The tract at residues 14-42 (AMHAGNRPNPPDDRPQPCRGKPPTSPGKT) is disordered. The next 2 helical transmembrane spans lie at 48–68 (FLGA…VAAA) and 70–90 (VFLV…LAVF). 3 YD repeats span residues 486-521 (YDAA…CADG), 592-628 (DDTG…LGRE), and 847-876 (YDAR…LTEV).

The protein belongs to the RHS/WapA nuclease family.

It localises to the membrane. Functionally, toxic component of a toxin-immunity protein module, which functions as a cellular contact-dependent growth inhibition (CDI) system. This protein may be a nuclease that is specifically inhibited by its cognate immunity protein RhsAI. Upon expression of the C-terminus (residues 1284-1434) in E.coli growth is inhibited, cells elongate, nucleoids condense and plasmid DNA is degraded; these effects are blocked specifically by cognate immunity protein RshIA. Cell contact is necessary for growth inhibition. In Dickeya dadantii (strain 3937) (Erwinia chrysanthemi (strain 3937)), this protein is Probable deoxyribonuclease RhsA (rhsA).